The chain runs to 248 residues: Small ribosomal subunit protein uS3 (248 aa).

Residues 39–108 (IRKLVSQKLA…TVAVNVAEIP (70 aa)) enclose the KH type-2 domain. The interval 212 to 248 (KTETLARPPRKSDERRREDGERPSRRRPTARRRPGGE) is disordered. Residues 221–234 (RKSDERRREDGERP) show a composition bias toward basic and acidic residues. The segment covering 235–248 (SRRRPTARRRPGGE) has biased composition (basic residues).

The protein belongs to the universal ribosomal protein uS3 family. Part of the 30S ribosomal subunit. Forms a tight complex with proteins S10 and S14.

Its function is as follows. Binds the lower part of the 30S subunit head. Binds mRNA in the 70S ribosome, positioning it for translation. This is Small ribosomal subunit protein uS3 from Deinococcus geothermalis (strain DSM 11300 / CIP 105573 / AG-3a).